Consider the following 592-residue polypeptide: Colicin-A (592 aa).

Composition is skewed to gly residues over residues 1 to 13 (MPGF…GDGT) and 23 to 34 (PEPGGGSHGNSG). 2 disordered regions span residues 1-57 (MPGF…PGDS) and 373-395 (RQRQ…KAKD). The next 2 helical transmembrane spans lie at 528-548 (WVLS…TLGA) and 555-575 (VPAI…GALI).

The protein belongs to the channel forming colicin family.

Its subcellular location is the cell membrane. Functionally, this colicin is a channel-forming colicin. This class of transmembrane toxins depolarize the cytoplasmic membrane, leading to dissipation of cellular energy. Its function is as follows. Colicins are polypeptide toxins produced by and active against E.coli and closely related bacteria. In Citrobacter freundii, this protein is Colicin-A (caa).